Reading from the N-terminus, the 223-residue chain is SCMKAAPMKEVSIRGQGSLAYPGLRTQGNLETLSGPNDATRGLTSLADTFEHVIEELLDEQQVIQPSKENKDADLYSTRVMLSSQVPLEPPLLFLLEEYKNYLDAANMSMRVRRHSDPARRGELSVCDSTSEWVTAAEKKTAVDMSGATVTVLEKVPVPKGQLKQYFYETKCSSKGYAKEGCRGIDKRYWNSQCRTTQSFVRALTMDNKKRIGWRFIRIDTSC.

Positions 1–5 (SCMKA) are cleaved as a signal peptide. A propeptide spanning residues 6 to 114 (APMKEVSIRG…AANMSMRVRR (109 aa)) is cleaved from the precursor. The N-linked (GlcNAc...) asparagine glycan is linked to asparagine 107. Intrachain disulfides connect cysteine 127–cysteine 194 and cysteine 172–cysteine 223.

The protein belongs to the NGF-beta family.

The protein localises to the secreted. Functionally, promotes the survival of neuronal populations that are all located either in the central nervous system or directly connected to it. The chain is Neurotrophic factor BDNF precursor form (BDNF) from Chilabothrus striatus (Haitian boa constrictor).